The following is a 246-amino-acid chain: Small ribosomal subunit protein uS2 (246 aa).

The interval 225–246 (SKSSASVPNKDEYVAAEDGAAE) is disordered.

This sequence belongs to the universal ribosomal protein uS2 family.

In Cellvibrio japonicus (strain Ueda107) (Pseudomonas fluorescens subsp. cellulosa), this protein is Small ribosomal subunit protein uS2.